Here is a 95-residue protein sequence, read N- to C-terminus: DNA-directed RNA polymerase subunit omega (95 aa).

Belongs to the RNA polymerase subunit omega family. In terms of assembly, the RNAP catalytic core consists of 2 alpha, 1 beta, 1 beta' and 1 omega subunit. When a sigma factor is associated with the core the holoenzyme is formed, which can initiate transcription.

It catalyses the reaction RNA(n) + a ribonucleoside 5'-triphosphate = RNA(n+1) + diphosphate. In terms of biological role, promotes RNA polymerase assembly. Latches the N- and C-terminal regions of the beta' subunit thereby facilitating its interaction with the beta and alpha subunits. The chain is DNA-directed RNA polymerase subunit omega from Colwellia psychrerythraea (strain 34H / ATCC BAA-681) (Vibrio psychroerythus).